The sequence spans 482 residues: UDP-N-acetylmuramate--L-alanine ligase (482 aa).

A disordered region spans residues 1–26; sequence MPQLPMTDSAPLPTPAPSSPAQPSAQ. 140–146 is an ATP binding site; the sequence is GTHGKTT.

It belongs to the MurCDEF family.

Its subcellular location is the cytoplasm. The enzyme catalyses UDP-N-acetyl-alpha-D-muramate + L-alanine + ATP = UDP-N-acetyl-alpha-D-muramoyl-L-alanine + ADP + phosphate + H(+). It functions in the pathway cell wall biogenesis; peptidoglycan biosynthesis. Cell wall formation. The sequence is that of UDP-N-acetylmuramate--L-alanine ligase from Deinococcus radiodurans (strain ATCC 13939 / DSM 20539 / JCM 16871 / CCUG 27074 / LMG 4051 / NBRC 15346 / NCIMB 9279 / VKM B-1422 / R1).